The chain runs to 186 residues: Casparian strip membrane protein 1 (186 aa).

Over 1–26 (MKGGSIELGEVSKNASTNKGVKRGLS) the chain is Cytoplasmic. The helical transmembrane segment at 27 to 47 (IMDFILRIIAGVATLASAVAM) threads the bilayer. At 48 to 72 (GTTDERLPFATSFVQFRAEYDDLPS) the chain is on the extracellular side. Residues 73-93 (FVFFVLANSIVCGYLALSLIL) traverse the membrane as a helical segment. Residues 94-107 (SILHIVRSTAVKSR) are Cytoplasmic-facing. The chain crosses the membrane as a helical span at residues 108–128 (ILLIVLDMVMMGLLAAAASAA). At 129-157 (ASIVYIAHYGNTQANWFPICQQYNSFCER) the chain is on the extracellular side. Residues 158 to 178 (ISGSLIGSYIAVALFIIIILL) form a helical membrane-spanning segment. The Cytoplasmic portion of the chain corresponds to 179–186 (SQSAISRN).

The protein belongs to the Casparian strip membrane proteins (CASP) family. Homodimer and heterodimers.

It is found in the cell membrane. Functionally, regulates membrane-cell wall junctions and localized cell wall deposition. Required for establishment of the Casparian strip membrane domain (CSD) and the subsequent formation of Casparian strips, a cell wall modification of the root endodermis that determines an apoplastic barrier between the intraorganismal apoplasm and the extraorganismal apoplasm and prevents lateral diffusion. The chain is Casparian strip membrane protein 1 from Medicago truncatula (Barrel medic).